The sequence spans 765 residues: MNTSGDPAQTGPEGCRGTMSAEEDARWLRWVTQQFKTIAGEDGEISLQEFKAALHVKESFFAERFFALFDSDRSGTITLQELQEALTLLIHGSPMDKLKFLFQVYDIDVCARQGASAGTEWGAGAGPHWASSPLGTGSGSIDPDELRTVLQSCLRESAISLPDEKLDQLTLALFESADADGNGAITFEELRDELQRFPGVMENLTISAAHWLTAPAPRPRPRRPRQLTRAYWHNHRSQLFCLATYAGLHVLLFGLAASAHRDLGASVMVAKGCGQCLNFDCSFIAVLMLRRCLTWLRATWLAQVLPLDQNIQFHQLMGYVVVGLSLVHTVAHTVNFVLQAQAEASPFQFWELLLTTRPGIGWVHGSASPTGVALLLLLLLMFICSSSCIRRSGHFEVFYWTHLSYLLVWLLLIFHGPNFWKWLLVPGILFFLEKAIGLAVSRMAAVCIMEVNLLPSKVTHLLIKRPPFFHYRPGDYLYLNIPTIARYEWHPFTISSAPEQKDTIWLHIRSQGQWTNRLYESFKASDPLGRGSKRLSRSVTMRKSQRSSKGSEILLEKHKFCNIKCYIDGPYGTPTRRIFASEHAVLIGAGIGITPFASILQSIMYRHQKRKHTCPSCQHSWIEGVQDNMKLHKVDFIWINRDQRSFEWFVSLLTKLEMDQAEEAQYGRFLELHMYMTSALGKNDMKAIGLQMALDLLANKEKKDSITGLQTRTQPGRPDWSKVFQKVAAEKKGKVQVFFCGSPALAKVLKGHCEKFGFRFFQENF.

Residues 1–77 form an N-terminal lobe of N-terminal regulatory EF domain region; that stretch reads MNTSGDPAQT…LFDSDRSGTI (77 aa). The N-terminal regulatory EF domain stretch occupies residues 1–161; sequence MNTSGDPAQT…SCLRESAISL (161 aa). Over 1–238 the chain is Cytoplasmic; that stretch reads MNTSGDPAQT…RAYWHNHRSQ (238 aa). EF-hand domains are found at residues 26–56 and 57–92; these read RWLRWVTQQFKTIAGEDGEISLQEFKAALHV and KESFFAERFFALFDSDRSGTITLQELQEALTLLIHG. Ca(2+)-binding residues include Asp42, Glu44, Glu49, Asp70, Asp72, Ser74, Thr76, Glu81, and Asp106. Residues 78–161 are C-terminal lobe of N-terminal regulatory EF domain; sequence TLQELQEALT…SCLRESAISL (84 aa). Positions 93 to 156 constitute an EF-hand 3; atypical; contains an insert of 28 residues domain; it reads SPMDKLKFLF…RTVLQSCLRE (64 aa). Position 107 is an S-nitrosocysteine (Ile107). Ca(2+) is bound by residues Asp108, Ser138, Ser140, Glu145, Asp178, Asp180, Asn182, and Glu189. Residues 122–141 form a disordered region; it reads GAGAGPHWASSPLGTGSGSI. The EF-hand 4 domain maps to 165 to 200; sequence KLDQLTLALFESADADGNGAITFEELRDELQRFPGV. Residues 239-259 traverse the membrane as a helical segment; sequence LFCLATYAGLHVLLFGLAASA. The residue at position 246 (Ala246) is an S-nitrosocysteine. At 260–266 the chain is on the extracellular side; sequence HRDLGAS. A helical membrane pass occupies residues 267-289; the sequence is VMVAKGCGQCLNFDCSFIAVLML. At 290 to 317 the chain is on the cytoplasmic side; the sequence is RRCLTWLRATWLAQVLPLDQNIQFHQLM. A Ferric oxidoreductase domain is found at 293 to 440; the sequence is LTWLRATWLA…FLEKAIGLAV (148 aa). A helical transmembrane segment spans residues 318–338; it reads GYVVVGLSLVHTVAHTVNFVL. The Extracellular segment spans residues 339 to 362; that stretch reads QAQAEASPFQFWELLLTTRPGIGW. Residues 363-383 traverse the membrane as a helical segment; it reads VHGSASPTGVALLLLLLLMFI. The Cytoplasmic portion of the chain corresponds to 384–394; sequence CSSSCIRRSGH. A helical transmembrane segment spans residues 395 to 417; it reads FEVFYWTHLSYLLVWLLLIFHGP. C-terminal catalytic dehydrogenase domain stretches follow at residues 398-719 and 416-737; these read FYWT…GRPD and GPNF…KVQV. Topologically, residues 418 to 434 are extracellular; it reads NFWKWLLVPGILFFLEK. A helical transmembrane segment spans residues 435–455; that stretch reads AIGLAVSRMAAVCIMEVNLLP. Residues 441–577 form the FAD-binding FR-type domain; the sequence is SRMAAVCIME…DGPYGTPTRR (137 aa). Topologically, residues 456–583 are cytoplasmic; sequence SKVTHLLIKR…PTRRIFASEH (128 aa). Phosphoserine; by CaMK2 is present on Asp475. His490 carries the post-translational modification Phosphothreonine; by PKC/PRKCA. Phosphothreonine; by CaMK2 and PKC/PRKCA is present on Ile494. A Phosphoserine; by CaMK2 and PKC/PRKCA modification is found at Pro498. Asp502 carries the phosphoserine; by CaMK2 modification. Tyr519 carries the S-nitrosocysteine modification. The helical transmembrane segment at 584–604 threads the bilayer; sequence AVLIGAGIGITPFASILQSIM. The Extracellular portion of the chain corresponds to 605-765; sequence YRHQKRKHTC…FGFRFFQENF (161 aa). Asp659 is subject to Phosphoserine; by CaMK2. Residue Leu694 is modified to S-nitrosocysteine.

As to quaternary structure, homooligomer. Requires FAD as cofactor. The cofactor is Mg(2+). In terms of processing, phosphorylation at Ser-475 by CaMK2 and at Ser-490, Thr-494 and Ser-498 by PKC/PRKCA positively regulates its catalytic activity. S-nitrosylation in response to nitric oxide inhibits its catalytic activity. In terms of tissue distribution, mainly expressed in pachytene spermatocytes of testis and in lymphocyte-rich areas of spleen and lymph nodes. Also detected in ovary, placenta, pancreas, cardiac fibroblasts. Expressed in B-cells and prostate malignant cells. As to expression, expressed in spleen. Expressed in endothelial cells, pulmonary artery smooth muscle cells and epithelial colorectal adenocarcinoma cells. Expressed in microvascular endothelial cells (at protein level). Expressed in testis. Expressed in endothelial cells and pulmonary artery smooth muscle cells. In terms of tissue distribution, expressed in pulmonary artery smooth muscle cells and epithelial colorectal adenocarcinoma cells. As to expression, expressed in endothelial cells and pulmonary artery smooth muscle cells. Expressed in microvascular endothelial cells (at protein level).

The protein resides in the endoplasmic reticulum. It is found in the cell membrane. The catalysed reaction is NADPH + 2 O2 = 2 superoxide + NADP(+) + H(+). Activated by calcium which induces conformational changes and interaction between the N-terminal regulatory region and the C-terminal catalytic region. Inhibited by diphenylene iodonium. Its function is as follows. Calcium-dependent NADPH oxidase that catalyzes the generation of superoxide from molecular oxygen utilizing NADPH as an electron donor. May play a role in cell growth and apoptosis. In terms of biological role, calcium-dependent NADPH oxidase that catalyzes the generation of superoxide from molecular oxygen utilizing NADPH as an electron donor. Involved in endothelial generation of reactive oxygen species (ROS), proliferation and angiogenesis and contributes to endothelial response to thrombin. Regulates redox-dependent processes in lymphocytes and spermatozoa. Calcium-dependent NADPH oxidase that catalyzes the generation of superoxide from molecular oxygen utilizing NADPH as an electron donor. Functionally, this isoform lacks calcium-binding domains and was showed to present a NADPH oxidase activity in a calcium-independent manner. May be involved in endothelial generation of reactive oxygen species (ROS), proliferation and angiogenesis and contribute to endothelial response to thrombin. However another study showed an absence of oxidase activity. Subject to rapid degradation. Its function is as follows. Lacks calcium-dependent NADPH oxidase activity. This chain is NADPH oxidase 5, found in Homo sapiens (Human).